We begin with the raw amino-acid sequence, 508 residues long: Photosystem II CP47 reaction center protein (508 aa).

6 consecutive transmembrane segments (helical) span residues 21 to 36 (SVHI…WAGS), 101 to 115 (IVFS…IWHW), 140 to 156 (GIHL…FGAF), 203 to 218 (IAAG…FHLS), 237 to 252 (VLSS…AFVV), and 457 to 472 (SFAL…HGAR).

It belongs to the PsbB/PsbC family. PsbB subfamily. In terms of assembly, PSII is composed of 1 copy each of membrane proteins PsbA, PsbB, PsbC, PsbD, PsbE, PsbF, PsbH, PsbI, PsbJ, PsbK, PsbL, PsbM, PsbT, PsbX, PsbY, PsbZ, Psb30/Ycf12, at least 3 peripheral proteins of the oxygen-evolving complex and a large number of cofactors. It forms dimeric complexes. The cofactor is Binds multiple chlorophylls. PSII binds additional chlorophylls, carotenoids and specific lipids..

It is found in the plastid. The protein resides in the chloroplast thylakoid membrane. In terms of biological role, one of the components of the core complex of photosystem II (PSII). It binds chlorophyll and helps catalyze the primary light-induced photochemical processes of PSII. PSII is a light-driven water:plastoquinone oxidoreductase, using light energy to abstract electrons from H(2)O, generating O(2) and a proton gradient subsequently used for ATP formation. The protein is Photosystem II CP47 reaction center protein of Gossypium hirsutum (Upland cotton).